Reading from the N-terminus, the 1199-residue chain is MVRLLLIFFPMIFLEMSILPRMPDRKVLLAGASSQRSVARMDGDVIIGALFSVHHQPPAEKVPERKCGEIREQYGIQRVEAMFHTLDKINADPVLLPNITLGSEIRDSCWHSSVALEQSIEFIRDSLISIRDEKDGLNRCLPDGQTLPPGRTKKPIAGVIGPGSSSVAIQVQNLLQLFDIPQIAYSATSIDLSDKTLYKYFLRVVPSDTLQARAMLDIVKRYNWTYVSAVHTEGNYGESGMDAFKELAAQEGLCIAHSDKIYSNAGEKSFDRLLRKLRERLPKARVVVCFCEGMTVRGLLSAMRRLGVVGEFSLIGSDGWADRDEVIEGYEVEANGGITIKLQSPEVRSFDDYFLKLRLDTNTRNPWFPEFWQHRFQCRLPGHLLENPNFKKVCTGNESLEENYVQDSKMGFVINAIYAMAHGLQNMHHALCPGHVGLCDAMKPIDGRKLLDFLIKSSFVGVSGEEVWFDEKGDAPGRYDIMNLQYTEANRYDYVHVGTWHEGVLNIDDYKIQMNKSGMVRSVCSEPCLKGQIKVIRKGEVSCCWICTACKENEFVQDEFTCRACDLGWWPNAELTGCEPIPVRYLEWSDIESIIAIAFSCLGILVTLFVTLIFVLYRDTPVVKSSSRELCYIILAGIFLGYVCPFTLIAKPTTTSCYLQRLLVGLSSAMCYSALVTKTNRIARILAGSKKKICTRKPRFMSAWAQVIIASILISVQLTLVVTLIIMEPPMPILSYPSIKEVYLICNTSNLGVVAPVGYNGLLIMSCTYYAFKTRNVPANFNEAKYIAFTMYTTCIIWLAFVPIYFGSNYKIITTCFAVSLSVTVALGCMFTPKMYIIIAKPERNVRSAFTTSDVVRMHVGDGKLPCRSNTFLNIFRRKKPGAGNANSNGKSVSWSEPGGRQAPKGQHVWQRLSVHVKTNETACNQTAVIKPLTKSYQGSGKSLTFSDASTKTLYNVEEEDNTPSAHFSPPSSPSMVVHRRGPPVATTPPLPPHLTAEETPLFLADSVIPKGLPPPLPQQQPQQPPPQQPPQQPKSLMDQLQGVVTNFGSGIPDFHAVLAGPGTPGNSLRSLYPPPPPPQHLQMLPLHLSTFQEESISPPGEDIDDDSERFKLLQEFVYEREGNTEEDELEEEEDLPTASKLTPEDSPALTPPSPFRDSVASGSSVPSSPVSESVLCTPPNVTYASVILRDYKQSSSTL.

A signal peptide spans 1–18 (MVRLLLIFFPMIFLEMSI). Residues 19 to 592 (LPRMPDRKVL…VRYLEWSDIE (574 aa)) are Extracellular-facing. A disulfide bridge connects residues Cys-67 and Cys-109. Tyr-74 is an L-glutamate binding site. Asn-98 carries N-linked (GlcNAc...) asparagine glycosylation. L-glutamate is bound by residues Ser-165 and 186-188 (SAT). N-linked (GlcNAc...) asparagine glycosylation is present at Asn-223. Tyr-236 serves as a coordination point for L-glutamate. Cys-289 and Cys-291 are disulfide-bonded. L-glutamate is bound at residue Asp-318. An intrachain disulfide couples Cys-378 to Cys-394. An N-linked (GlcNAc...) asparagine glycan is attached at Asn-397. Lys-409 lines the L-glutamate pocket. An intrachain disulfide couples Cys-432 to Cys-439. An N-linked (GlcNAc...) asparagine glycan is attached at Asn-515. The chain crosses the membrane as a helical span at residues 593-615 (SIIAIAFSCLGILVTLFVTLIFV). The Cytoplasmic portion of the chain corresponds to 616–629 (LYRDTPVVKSSSRE). A helical transmembrane segment spans residues 630 to 650 (LCYIILAGIFLGYVCPFTLIA). At 651-658 (KPTTTSCY) the chain is on the extracellular side. A disulfide bond links Cys-657 and Cys-746. Residues 659-680 (LQRLLVGLSSAMCYSALVTKTN) form a helical membrane-spanning segment. Residues 681–703 (RIARILAGSKKKICTRKPRFMSA) are Cytoplasmic-facing. A helical membrane pass occupies residues 704–727 (WAQVIIASILISVQLTLVVTLIIM). Over 728-750 (EPPMPILSYPSIKEVYLICNTSN) the chain is Extracellular. A helical membrane pass occupies residues 751-772 (LGVVAPVGYNGLLIMSCTYYAF). Residues 773–785 (KTRNVPANFNEAK) lie on the Cytoplasmic side of the membrane. The helical transmembrane segment at 786 to 807 (YIAFTMYTTCIIWLAFVPIYFG) threads the bilayer. Topologically, residues 808 to 815 (SNYKIITT) are extracellular. The chain crosses the membrane as a helical span at residues 816–840 (CFAVSLSVTVALGCMFTPKMYIIIA). The Cytoplasmic segment spans residues 841-1199 (KPERNVRSAF…RDYKQSSSTL (359 aa)). Ser-853 is modified (phosphoserine). Thr-871 bears the Phosphothreonine mark. Disordered stretches follow at residues 882–905 (GAGN…QAPK), 959–1036 (EEDN…QPKS), and 1056–1081 (HAVL…PPQH). Residues 885–895 (NANSNGKSVSW) are compositionally biased toward polar residues. 2 positions are modified to phosphoserine: Ser-894 and Ser-969. Residues 1012–1033 (GLPPPLPQQQPQQPPPQQPPQQ) are compositionally biased toward pro residues. The residue at position 1098 (Ser-1098) is a Phosphoserine. The interval 1120–1177 (EREGNTEEDELEEEEDLPTASKLTPEDSPALTPPSPFRDSVASGSSVPSSPVSESVLC) is disordered. Over residues 1125 to 1136 (TEEDELEEEEDL) the composition is skewed to acidic residues. At Ser-1147 the chain carries Phosphoserine. Thr-1151 is subject to Phosphothreonine. The residue at position 1154 (Ser-1154) is a Phosphoserine. The span at 1159-1175 (SVASGSSVPSSPVSESV) shows a compositional bias: low complexity.

This sequence belongs to the G-protein coupled receptor 3 family. Homodimer; disulfide-linked. The PPXXF motif binds HOMER1, HOMER2 and HOMER3. Interacts with TAMALIN. Interacts with RYR1, RYR2, ITPR1, SHANK1 and SHANK3. Interacts with SIAH1. In terms of tissue distribution, predominantly expressed in cerebellar Purkinje cells, CA2-CA3 pyramidal cells of the hippocampus, and mitral and tufted cells of the olfactory bulb.

It is found in the cell membrane. Its subcellular location is the postsynaptic cell membrane. It localises to the cell projection. The protein resides in the dendrite. Functionally, G-protein coupled receptor for glutamate. Ligand binding causes a conformation change that triggers signaling via guanine nucleotide-binding proteins (G proteins) and modulates the activity of down-stream effectors. Signaling activates a phosphatidylinositol-calcium second messenger system. May participate in the central action of glutamate in the CNS, such as long-term potentiation in the hippocampus and long-term depression in the cerebellum. May function in the light response in the retina. Induces GRID1 and GRID2 cation-channel activation via GNAQ-PLC-PKC pathway in dopaminergic neurons and cerebellar Purkinje cell, respectively. The polypeptide is Metabotropic glutamate receptor 1 (Grm1) (Rattus norvegicus (Rat)).